The primary structure comprises 242 residues: Lactate utilization protein A 1 (242 aa).

The protein belongs to the LutA/YkgE family.

In terms of biological role, is involved in L-lactate degradation and allows cells to grow with lactate as the sole carbon source. This chain is Lactate utilization protein A 1, found in Bacillus anthracis (strain CDC 684 / NRRL 3495).